The following is a 486-amino-acid chain: Transcriptional regulator ERG (486 aa).

The segment covering 41 to 54 (TASSSSDYGQTSKM) has biased composition (polar residues). 2 disordered regions span residues 41–62 (TASS…PQQD) and 79–99 (PSQV…KGGK). Residues Ser-55, Ser-88, and Ser-103 each carry the phosphoserine modification. A PNT domain is found at 120 to 206 (VPPPNMTTNE…SHLHYLRETP (87 aa)). The interval 249–311 (QRITTRPDLP…ILGPTSSRLA (63 aa)) is disordered. Polar residues predominate over residues 271-284 (SHLTPQSKAAQPSP). A Glycyl lysine isopeptide (Lys-Gly) (interchain with G-Cter in SUMO2) cross-link involves residue Lys-289. A DNA-binding region (ETS) is located at residues 318–398 (IQLWQFLLEL…HGKRYAYKFD (81 aa)).

It belongs to the ETS family. As to quaternary structure, identified in a IGF2BP1-dependent mRNP granule complex containing untranslated mRNAs. Interacts with SETDB1.

The protein localises to the nucleus. It is found in the cytoplasm. Its function is as follows. Transcriptional regulator. May participate in transcriptional regulation through the recruitment of SETDB1 histone methyltransferase and subsequent modification of local chromatin structure. This chain is Transcriptional regulator ERG (Erg), found in Mus musculus (Mouse).